The chain runs to 151 residues: Small ribosomal subunit protein uS15 (151 aa).

The segment at 1–20 (MARLHSGKRGSSGSTRPLRT) is disordered.

It belongs to the universal ribosomal protein uS15 family. Part of the 30S ribosomal subunit.

The sequence is that of Small ribosomal subunit protein uS15 from Methanococcus maripaludis (strain C7 / ATCC BAA-1331).